A 263-amino-acid chain; its full sequence is Ribonuclease HII (263 aa).

The RNase H type-2 domain occupies 71 to 262 (QAIAGIDEVG…VKSMCCDSTN (192 aa)). Positions 77, 78, and 172 each coordinate a divalent metal cation.

It belongs to the RNase HII family. The cofactor is Mn(2+). Mg(2+) is required as a cofactor.

It localises to the cytoplasm. The catalysed reaction is Endonucleolytic cleavage to 5'-phosphomonoester.. Its function is as follows. Endonuclease that specifically degrades the RNA of RNA-DNA hybrids. This Streptococcus pyogenes serotype M4 (strain MGAS10750) protein is Ribonuclease HII.